Reading from the N-terminus, the 91-residue chain is Small ribosomal subunit protein uS17 (91 aa).

The protein belongs to the universal ribosomal protein uS17 family. Part of the 30S ribosomal subunit.

Its function is as follows. One of the primary rRNA binding proteins, it binds specifically to the 5'-end of 16S ribosomal RNA. This Thermobifida fusca (strain YX) protein is Small ribosomal subunit protein uS17.